We begin with the raw amino-acid sequence, 264 residues long: Carbonic anhydrase (264 aa).

The tat-type signal signal peptide spans methionine 1–alanine 33. The 229-residue stretch at valine 36–isoleucine 264 folds into the Alpha-carbonic anhydrase domain. The Zn(2+) site is built by histidine 127, histidine 129, and histidine 146. Threonine 214–threonine 215 contacts substrate.

It belongs to the alpha-carbonic anhydrase family. The cofactor is Zn(2+). Post-translationally, predicted to be exported by the Tat system. The position of the signal peptide cleavage has not been experimentally proven.

The enzyme catalyses hydrogencarbonate + H(+) = CO2 + H2O. Its function is as follows. Reversible hydration of carbon dioxide. The protein is Carbonic anhydrase (ecaA) of Nostoc sp. (strain PCC 7120 / SAG 25.82 / UTEX 2576).